The primary structure comprises 115 residues: Phosphoribosyl-AMP cyclohydrolase (115 aa).

Asp-80 lines the Mg(2+) pocket. Position 81 (Cys-81) interacts with Zn(2+). The Mg(2+) site is built by Asp-82 and Asp-84. Zn(2+) contacts are provided by Cys-97 and Cys-104.

This sequence belongs to the PRA-CH family. In terms of assembly, homodimer. The cofactor is Mg(2+). Zn(2+) serves as cofactor.

It is found in the cytoplasm. The catalysed reaction is 1-(5-phospho-beta-D-ribosyl)-5'-AMP + H2O = 1-(5-phospho-beta-D-ribosyl)-5-[(5-phospho-beta-D-ribosylamino)methylideneamino]imidazole-4-carboxamide. The protein operates within amino-acid biosynthesis; L-histidine biosynthesis; L-histidine from 5-phospho-alpha-D-ribose 1-diphosphate: step 3/9. In terms of biological role, catalyzes the hydrolysis of the adenine ring of phosphoribosyl-AMP. The protein is Phosphoribosyl-AMP cyclohydrolase of Mycobacterium bovis (strain ATCC BAA-935 / AF2122/97).